The following is a 265-amino-acid chain: Translation initiation factor 2 subunit alpha (265 aa).

The 71-residue stretch at 12-82 folds into the S1 motif domain; the sequence is GELVIGTVKK…KMRVVEVSLK (71 aa).

It belongs to the eIF-2-alpha family. In terms of assembly, heterotrimer composed of an alpha, a beta and a gamma chain.

EIF-2 functions in the early steps of protein synthesis by forming a ternary complex with GTP and initiator tRNA. The protein is Translation initiation factor 2 subunit alpha of Pyrobaculum aerophilum (strain ATCC 51768 / DSM 7523 / JCM 9630 / CIP 104966 / NBRC 100827 / IM2).